The chain runs to 674 residues: Probable nucleolar GTP-binding protein 1 (674 aa).

Residues 169-346 form the OBG-type G domain; sequence RTLLLTGYPN…VKDTACSILF (178 aa). GTP contacts are provided by residues 175 to 182, 221 to 225, and 289 to 292; these read GYPNVGKS, DTPGI, and NKID. The segment covering 518–527 has biased composition (basic and acidic residues); it reads RINHQIKDSS. Disordered stretches follow at residues 518-538 and 564-674; these read RINH…RRGI and VRDH…NDFR. A compositionally biased stretch (basic residues) spans 570-580; that stretch reads SRISGKKRSRS. Basic and acidic residues-rich tracts occupy residues 619-633 and 641-653; these read GFHD…DKLD and NQDG…DRHV.

This sequence belongs to the TRAFAC class OBG-HflX-like GTPase superfamily. OBG GTPase family. NOG subfamily.

It localises to the nucleus. The protein localises to the nucleolus. Involved in the biogenesis of the 60S ribosomal subunit. This Dictyostelium discoideum (Social amoeba) protein is Probable nucleolar GTP-binding protein 1 (nog1).